A 540-amino-acid polypeptide reads, in one-letter code: Glucose-6-phosphate isomerase (540 aa).

The Proton donor role is filled by glutamate 350. Catalysis depends on residues histidine 381 and lysine 503.

This sequence belongs to the GPI family.

The protein localises to the cytoplasm. It carries out the reaction alpha-D-glucose 6-phosphate = beta-D-fructose 6-phosphate. It participates in carbohydrate biosynthesis; gluconeogenesis. Its pathway is carbohydrate degradation; glycolysis; D-glyceraldehyde 3-phosphate and glycerone phosphate from D-glucose: step 2/4. Catalyzes the reversible isomerization of glucose-6-phosphate to fructose-6-phosphate. The polypeptide is Glucose-6-phosphate isomerase (Burkholderia cenocepacia (strain ATCC BAA-245 / DSM 16553 / LMG 16656 / NCTC 13227 / J2315 / CF5610) (Burkholderia cepacia (strain J2315))).